Consider the following 51-residue polypeptide: Kunitz-like toxin PcKuz3 (51 aa).

3 disulfide bridges follow: cysteine 1-cysteine 51, cysteine 10-cysteine 34, and cysteine 26-cysteine 47.

It belongs to the venom Kunitz-type family. Sea anemone type 2 potassium channel toxin subfamily.

It localises to the secreted. Its subcellular location is the nematocyst. Its function is as follows. Potent toxin and weak serine protease inhibitor that displays activity on both trypsin and elastase. May act as a neurotoxin by blocking voltage-gated potassium channels (Kv1.1/KCNA1 and Kv1.2/KCNA2). Has a neuroprotective effect, since it suppress, at low concentration, the 6-hydroxydopamine-induced neurotoxicity on the locomotive behavior of zebrafish. In vivo, has strong reversible antilocomotor activity. In addition, it is lethal to zebrafish larvae at high doses. The sequence is that of Kunitz-like toxin PcKuz3 from Palythoa caribaeorum (White encrusting zoanthid coral).